Here is a 670-residue protein sequence, read N- to C-terminus: Protein HBS1 (670 aa).

2 disordered regions span residues 60-88 and 164-202; these read KDIQEEEADEDEDEDAAFAKARRDSESFQ and KTVSKTVPTPPPKISLKEPRRGFEIPSPKVPSSPVVSGR. Residues 63 to 75 are compositionally biased toward acidic residues; the sequence is QEEEADEDEDEDA. A compositionally biased stretch (low complexity) spans 189 to 200; sequence PSPKVPSSPVVS. Residues 245-468 enclose the tr-type G domain; that stretch reads KSHIHMIVIG…DVIENFKIPE (224 aa). The segment at 254-261 is G1; the sequence is GHVDAGKS. Residue 254–261 participates in GTP binding; sequence GHVDAGKS. Residues 310–314 form a G2 region; sequence GITMD. The tract at residues 331–334 is G3; the sequence is DAPG. Residues 393–396 and 432–434 each bind GTP; these read NKLD and SGL. Residues 393-396 are G4; the sequence is NKLD. The tract at residues 432-434 is G5; that stretch reads SGL.

The protein belongs to the TRAFAC class translation factor GTPase superfamily. Classic translation factor GTPase family. In terms of assembly, component of the Pelota-HBS1L complex, also named Dom34-Hbs1 complex, composed of pelo and HBS1. In terms of tissue distribution, expressed in ovaries (at protein level).

The protein resides in the cytoplasm. The enzyme catalyses GTP + H2O = GDP + phosphate + H(+). GTPase component of the Pelota-HBS1L complex, a complex that recognizes stalled ribosomes and triggers the No-Go Decay (NGD) pathway. The Pelota-HBS1L complex recognizes ribosomes stalled at the 3' end of an mRNA and engages stalled ribosomes by destabilizing mRNA in the mRNA channel. Following ribosome-binding, the Pelota-HBS1L complex promotes recruitment of pix, which drives the disassembly of stalled ribosomes, followed by degradation of damaged mRNAs as part of the NGD pathway. Together with pelo, required for transposon silencing in the ovary and testis. Together with pelo, promotes meiosis and spermatid individualization during spermatogenesis. The polypeptide is Protein HBS1 (Drosophila melanogaster (Fruit fly)).